A 253-amino-acid chain; its full sequence is MENSMMFISRSLRRPVTALNCNLQSVRTVIYLHKGPRINGLRRDPESYLRNPSGVLFTEVNAKECQDKVRSILQLPKYGINLSNELILQCLTHKSFAHGSKPYNEKLNLLGAQFLKLQTCIHSLKNGSPAESCENGQLSLQFSNLGTKFAKELTSKNTACTFVKLHNLDPFIFWKMRDPIKDGHINGETTIFASVLNAFIGAILSTNGSEKAAKFIQGSLLDKEDLHSLVNIANENVASAKAKISDKENKAFL.

The N-terminal 28 residues, 1–28 (MENSMMFISRSLRRPVTALNCNLQSVRT), are a transit peptide targeting the mitochondrion.

It belongs to the ribonuclease III family. Mitochondrion-specific ribosomal protein mL57 subfamily. As to quaternary structure, component of the mitochondrial large ribosomal subunit (mt-LSU). Mature yeast 74S mitochondrial ribosomes consist of a small (37S) and a large (54S) subunit. The 37S small subunit contains a 15S ribosomal RNA (15S mt-rRNA) and 34 different proteins. The 54S large subunit contains a 21S rRNA (21S mt-rRNA) and 46 different proteins. mL57 forms a heterodimer with mL44 and stabilizes rRNA expansion segments 1/2 at a membrane-facing protuberance close to the point of attachment of the ribosome to the translocon in the membrane.

It localises to the mitochondrion. In terms of biological role, component of the mitochondrial ribosome (mitoribosome), a dedicated translation machinery responsible for the synthesis of mitochondrial genome-encoded proteins, including at least some of the essential transmembrane subunits of the mitochondrial respiratory chain. The mitoribosomes are attached to the mitochondrial inner membrane and translation products are cotranslationally integrated into the membrane. This chain is Large ribosomal subunit protein mL57 (MRPL15), found in Saccharomyces cerevisiae (strain ATCC 204508 / S288c) (Baker's yeast).